Reading from the N-terminus, the 407-residue chain is Ran GTPase-activating protein 1 (407 aa).

11 LRR repeats span residues 11–39, 40–67, 68–101, 102–133, 134–166, 167–197, 198–226, 227–256, 257–285, 286–315, and 316–346; these read EEEQVYSISGKALKLTTSDDIKPYLEELA, ALKTCTKLDLSGNTIGTEASEALAKCIA, ENTQVRESLVEVNFADLYTSRLVDEVVDSLKFLL, PVLLKCPHLEIVNLSDNAFGLRTIELLEDYIA, HAVNIKHLILSNNGMGPFAGERIGKALFHLAQN, KKAASKPFLETFICGRNRLENGSAVYLALGL, KSHSEGLKVVKLYQNGIRPKGVATLIHYG, LQYLKNLEILDLQDNTFTKHASLILAKALP, TWKDSLFELNLNDCLLKTAGSDEVFKVFT, EVKFPNLHVLKFEYNEMAQETIEVSFLPAM, and EKGNLPELEKLEINGNRLDEDSDALDLLQSK. The tract at residues 353–378 is disordered; it reads DDFEEVDSEDEEGEDEEDEDEDEKLE. A Phosphoserine modification is found at S360.

This sequence belongs to the RNA1 family.

The protein resides in the cytoplasm. Functionally, GTPase activator for the nuclear Ras-related regulatory protein GSP1 (Ran), converting it to the putatively inactive GDP-bound state. The protein is Ran GTPase-activating protein 1 (RNA1) of Saccharomyces cerevisiae (strain ATCC 204508 / S288c) (Baker's yeast).